The primary structure comprises 238 residues: Ribonuclease PH (238 aa).

Phosphate contacts are provided by residues arginine 86 and 124-126 (GTR).

The protein belongs to the RNase PH family. Homohexameric ring arranged as a trimer of dimers.

It catalyses the reaction tRNA(n+1) + phosphate = tRNA(n) + a ribonucleoside 5'-diphosphate. Its function is as follows. Phosphorolytic 3'-5' exoribonuclease that plays an important role in tRNA 3'-end maturation. Removes nucleotide residues following the 3'-CCA terminus of tRNAs; can also add nucleotides to the ends of RNA molecules by using nucleoside diphosphates as substrates, but this may not be physiologically important. Probably plays a role in initiation of 16S rRNA degradation (leading to ribosome degradation) during starvation. The protein is Ribonuclease PH of Psychrobacter cryohalolentis (strain ATCC BAA-1226 / DSM 17306 / VKM B-2378 / K5).